Reading from the N-terminus, the 35-residue chain is 3-hydroxyisobutyrate dehydrogenase (35 aa).

4 to 33 (TPVGFIGLGNMGNPMAKNLMKHGYPLIIYD) contributes to the NAD(+) binding site. K24 carries the N6-acetyllysine; alternate modification. An N6-succinyllysine; alternate modification is found at K24.

Belongs to the HIBADH-related family. 3-hydroxyisobutyrate dehydrogenase subfamily. Homodimer.

The protein resides in the mitochondrion. The enzyme catalyses 3-hydroxy-2-methylpropanoate + NAD(+) = 2-methyl-3-oxopropanoate + NADH + H(+). The protein operates within amino-acid degradation; L-valine degradation. This chain is 3-hydroxyisobutyrate dehydrogenase (HIBADH), found in Oryctolagus cuniculus (Rabbit).